A 317-amino-acid chain; its full sequence is Melanocyte-stimulating hormone receptor (317 aa).

At 1–37 the chain is on the extracellular side; it reads MPVQGSQRRLLGSLNSTPTATPHLGLAANQTGARCLE. Asn-29 is a glycosylation site (N-linked (GlcNAc...) asparagine). The helical transmembrane segment at 38-63 threads the bilayer; it reads VSVPDGLFLSLGLVSLVENVLVVTAI. Residues 64–72 are Cytoplasmic-facing; it reads AKNRNLHSP. Residues 73 to 93 traverse the membrane as a helical segment; it reads MYCFICCLALSDLLVSGSNML. At 94 to 118 the chain is on the extracellular side; that stretch reads ETAVTLLLEAGVLAARAAVVQQLDN. Residues 119–140 traverse the membrane as a helical segment; that stretch reads VIDVITCSSMLSSLCFLGAIAV. Residues 141–163 are Cytoplasmic-facing; it reads DRYISIFYALRYHSIVTLPRARR. The helical transmembrane segment at 164 to 183 threads the bilayer; the sequence is AVAAIWVASVLFSTLFIAYY. Residues 184-191 are Extracellular-facing; it reads DHAAVLLC. Residues 192-211 traverse the membrane as a helical segment; sequence LVIFFLAMLVLMAVLYVHML. Topologically, residues 212–240 are cytoplasmic; it reads ARACQHAQGIARLHKRQRLAHQGFGLKGA. Residues 241 to 266 traverse the membrane as a helical segment; the sequence is ATLTILLGIFFLCWGPFFLHLTLIVL. Over 267-279 the chain is Extracellular; that stretch reads CPQHPTCSCIFKN. A helical transmembrane segment spans residues 280–300; the sequence is FNLFLALIICNAIIDPLIYAF. Over 301–317 the chain is Cytoplasmic; sequence RSQELRRTLKEVLLCSW. Cys-315 carries S-palmitoyl cysteine lipidation.

Belongs to the G-protein coupled receptor 1 family. Interacts with MGRN1, but does not undergo MGRN1-mediated ubiquitination; this interaction competes with GNAS-binding and thus inhibits agonist-induced cAMP production. Interacts with OPN3; the interaction results in a decrease in MC1R-mediated cAMP signaling and ultimately a decrease in melanin production in melanocytes.

The protein resides in the cell membrane. In terms of biological role, receptor for MSH (alpha, beta and gamma) and ACTH. The activity of this receptor is mediated by G proteins which activate adenylate cyclase. Mediates melanogenesis, the production of eumelanin (black/brown) and phaeomelanin (red/yellow), via regulation of cAMP signaling in melanocytes. The sequence is that of Melanocyte-stimulating hormone receptor (MC1R) from Papio anubis (Olive baboon).